The primary structure comprises 147 residues: UPF0178 protein CV_1768 (147 aa).

This sequence belongs to the UPF0178 family.

This chain is UPF0178 protein CV_1768, found in Chromobacterium violaceum (strain ATCC 12472 / DSM 30191 / JCM 1249 / CCUG 213 / NBRC 12614 / NCIMB 9131 / NCTC 9757 / MK).